The chain runs to 236 residues: MTKRYWNIILEEMMEAGVHFGHGTRKWNPKMSPYISANRKGIHITNLIRTARFLSESCDLVFHAASGGKQFLIVGTKKKAADSVARAAIRARCHYVNKKWLGGMLTNWYTTKTRLQKFRDLRMQQKTGRFDCFPKKDAAILKRHLAQLETYLGGIKYMKGLPDIVIIIDQQEEYTALRECITLEIPTICLIDTNSDPDLADISIPANDDAIASIRFILNKLVFAICEGRSRSIRNS.

Belongs to the universal ribosomal protein uS2 family.

Its subcellular location is the plastid. The protein localises to the chloroplast. This chain is Small ribosomal subunit protein uS2c (rps2), found in Phaseolus vulgaris (Kidney bean).